Here is a 387-residue protein sequence, read N- to C-terminus: 4-hydroxy-3-methylbut-2-en-1-yl diphosphate synthase (flavodoxin) (387 aa).

4 residues coordinate [4Fe-4S] cluster: cysteine 280, cysteine 283, cysteine 315, and glutamate 322.

Belongs to the IspG family. [4Fe-4S] cluster is required as a cofactor.

The enzyme catalyses (2E)-4-hydroxy-3-methylbut-2-enyl diphosphate + oxidized [flavodoxin] + H2O + 2 H(+) = 2-C-methyl-D-erythritol 2,4-cyclic diphosphate + reduced [flavodoxin]. Its pathway is isoprenoid biosynthesis; isopentenyl diphosphate biosynthesis via DXP pathway; isopentenyl diphosphate from 1-deoxy-D-xylulose 5-phosphate: step 5/6. Converts 2C-methyl-D-erythritol 2,4-cyclodiphosphate (ME-2,4cPP) into 1-hydroxy-2-methyl-2-(E)-butenyl 4-diphosphate. This is 4-hydroxy-3-methylbut-2-en-1-yl diphosphate synthase (flavodoxin) from Mycobacterium bovis (strain ATCC BAA-935 / AF2122/97).